The chain runs to 156 residues: 3-hydroxyacyl-[acyl-carrier-protein] dehydratase FabZ (156 aa).

Residue His-50 is part of the active site.

The protein belongs to the thioester dehydratase family. FabZ subfamily.

The protein localises to the cytoplasm. The enzyme catalyses a (3R)-hydroxyacyl-[ACP] = a (2E)-enoyl-[ACP] + H2O. Functionally, involved in unsaturated fatty acids biosynthesis. Catalyzes the dehydration of short chain beta-hydroxyacyl-ACPs and long chain saturated and unsaturated beta-hydroxyacyl-ACPs. The polypeptide is 3-hydroxyacyl-[acyl-carrier-protein] dehydratase FabZ (Janthinobacterium sp. (strain Marseille) (Minibacterium massiliensis)).